Here is a 91-residue protein sequence, read N- to C-terminus: Small ribosomal subunit protein uS19 (91 aa).

This sequence belongs to the universal ribosomal protein uS19 family.

In terms of biological role, protein S19 forms a complex with S13 that binds strongly to the 16S ribosomal RNA. In Cupriavidus necator (strain ATCC 17699 / DSM 428 / KCTC 22496 / NCIMB 10442 / H16 / Stanier 337) (Ralstonia eutropha), this protein is Small ribosomal subunit protein uS19.